Reading from the N-terminus, the 202-residue chain is MGTSNQPHIVWHEASVSKEERQKRNRLKSCVVWFTGLSGSGKSTLANALDRKLFEEGIHSYVLDGDNIRHGLNAGLGFSEEDRKENIRRIGEVAKLFVDAGVVTSTAFISPFREDRDNVRGILDDGEFIEVYVRCPLETCEKRDPKGLYKKARSGDIPEFTGISSPYEEPVNPELIIDTDQLAVEEAVEKIYAYLHAQESGK.

36–43 (GLSGSGKS) lines the ATP pocket. The Phosphoserine intermediate role is filled by serine 110.

It belongs to the APS kinase family.

The enzyme catalyses adenosine 5'-phosphosulfate + ATP = 3'-phosphoadenylyl sulfate + ADP + H(+). It functions in the pathway sulfur metabolism; hydrogen sulfide biosynthesis; sulfite from sulfate: step 2/3. Functionally, catalyzes the synthesis of activated sulfate. The protein is Probable adenylyl-sulfate kinase of Halalkalibacterium halodurans (strain ATCC BAA-125 / DSM 18197 / FERM 7344 / JCM 9153 / C-125) (Bacillus halodurans).